The chain runs to 409 residues: MIANISPLAPSYTPELPAIDGITLRTVCAGYKNWQRNDLSLFLFQPNTVVAGLTTQSACPSPEVEWCRAAIKKGKARALVVNAGNSNAFTGHKGREAVAAITARVADHLKCALHEVFVSSTGVIGVPLPIKTACDGLEKAFSAEDVNWEHMANAIMTTDTFAKMSRQDITIQGKSVKMVGIIKGSGMIAPDMATMLGYIFTDAAVAPELLQKMLTKANKKSFSCITVDSDTSTSDTVLAFATAAAGNPILSSEEDKDADKLQEAVTAICLDLAQQVVRDGEGASKFISVSVNGAVSDESAHIIAMSIANSPLVKTAMAGEDANWGRVVMAVGKAGQPAERDLLSIRFGGIEVAAKGMVVPNYDEAPVAAHLKGKEIDISVDIGLGKGQAQVWTCDLTHGYISINADYRS.

Substrate contacts are provided by threonine 157, lysine 183, threonine 194, glutamate 281, asparagine 404, and serine 409. Threonine 194 acts as the Nucleophile in catalysis.

The protein belongs to the ArgJ family. In terms of assembly, heterotetramer of two alpha and two beta chains.

The protein localises to the cytoplasm. The enzyme catalyses N(2)-acetyl-L-ornithine + L-glutamate = N-acetyl-L-glutamate + L-ornithine. The catalysed reaction is L-glutamate + acetyl-CoA = N-acetyl-L-glutamate + CoA + H(+). It participates in amino-acid biosynthesis; L-arginine biosynthesis; L-ornithine and N-acetyl-L-glutamate from L-glutamate and N(2)-acetyl-L-ornithine (cyclic): step 1/1. Its pathway is amino-acid biosynthesis; L-arginine biosynthesis; N(2)-acetyl-L-ornithine from L-glutamate: step 1/4. In terms of biological role, catalyzes two activities which are involved in the cyclic version of arginine biosynthesis: the synthesis of N-acetylglutamate from glutamate and acetyl-CoA as the acetyl donor, and of ornithine by transacetylation between N(2)-acetylornithine and glutamate. This Zymomonas mobilis subsp. mobilis (strain ATCC 31821 / ZM4 / CP4) protein is Arginine biosynthesis bifunctional protein ArgJ.